The primary structure comprises 952 residues: Leucine--tRNA ligase (952 aa).

Residues Pro48–His58 carry the 'HIGH' region motif. A 'KMSKS' region motif is present at residues Lys644–Ser648. Lys647 serves as a coordination point for ATP.

This sequence belongs to the class-I aminoacyl-tRNA synthetase family.

It is found in the cytoplasm. It catalyses the reaction tRNA(Leu) + L-leucine + ATP = L-leucyl-tRNA(Leu) + AMP + diphosphate. In Methanococcus vannielii (strain ATCC 35089 / DSM 1224 / JCM 13029 / OCM 148 / SB), this protein is Leucine--tRNA ligase.